The following is an 81-amino-acid chain: MDPLISAASVIAAGLAVGLASIGPGVGQGTAAGQAVEGIARQPEAEGKIRGTLLLSLAFMEALTIYGLVVALALLFANPFV.

The next 2 membrane-spanning stretches (helical) occupy residues 3 to 23 (PLIS…ASIG) and 57 to 77 (LAFM…LLFA).

It belongs to the ATPase C chain family. In terms of assembly, F-type ATPases have 2 components, F(1) - the catalytic core - and F(0) - the membrane proton channel. F(1) has five subunits: alpha(3), beta(3), gamma(1), delta(1), epsilon(1). F(0) has four main subunits: a(1), b(1), b'(1) and c(10-14). The alpha and beta chains form an alternating ring which encloses part of the gamma chain. F(1) is attached to F(0) by a central stalk formed by the gamma and epsilon chains, while a peripheral stalk is formed by the delta, b and b' chains.

Its subcellular location is the plastid. It localises to the chloroplast thylakoid membrane. In terms of biological role, f(1)F(0) ATP synthase produces ATP from ADP in the presence of a proton or sodium gradient. F-type ATPases consist of two structural domains, F(1) containing the extramembraneous catalytic core and F(0) containing the membrane proton channel, linked together by a central stalk and a peripheral stalk. During catalysis, ATP synthesis in the catalytic domain of F(1) is coupled via a rotary mechanism of the central stalk subunits to proton translocation. Key component of the F(0) channel; it plays a direct role in translocation across the membrane. A homomeric c-ring of between 10-14 subunits forms the central stalk rotor element with the F(1) delta and epsilon subunits. This Ipomoea purpurea (Common morning glory) protein is ATP synthase subunit c, chloroplastic.